The chain runs to 364 residues: Coproporphyrin III ferrochelatase (364 aa).

Positions 29 and 118 each coordinate Fe-coproporphyrin III. 2 residues coordinate Fe(2+): His169 and Glu250.

Belongs to the ferrochelatase family.

The protein localises to the cytoplasm. It carries out the reaction Fe-coproporphyrin III + 2 H(+) = coproporphyrin III + Fe(2+). Its pathway is porphyrin-containing compound metabolism; protoheme biosynthesis. Functionally, involved in coproporphyrin-dependent heme b biosynthesis. Catalyzes the insertion of ferrous iron into coproporphyrin III to form Fe-coproporphyrin III. In Streptococcus pneumoniae serotype 2 (strain D39 / NCTC 7466), this protein is Coproporphyrin III ferrochelatase.